The primary structure comprises 238 residues: Isoprene-epoxide--glutathione S-transferase (238 aa).

A GST N-terminal domain is found at 7 to 82 (YVPAWGIPDI…YLKNKFGDKL (76 aa)). In terms of domain architecture, GST C-terminal spans 118–238 (DAGWETYIPF…LERIRKQYDI (121 aa)).

This sequence belongs to the GST superfamily. In terms of assembly, homodimer.

It carries out the reaction 2-glutathionyl-2-methylbut-3-en-1-ol = (3R)-3,4-epoxy-3-methylbut-1-ene + glutathione. Activity is inhibited by 1,2-epoxyhexane. Involved in isoprene degradation. Catalyzes the glutathione-dependent ring opening of various epoxides. The highest conversion rate is observed with the physiological substrate, 3,4-epoxy-3-methyl-1-butene, which is the primary oxidation product of isoprene. It can also use other epoxides, including epoxyethane, epoxypropane, epithiopropane, epichlorohydrin, epifluorohydrin, epibromohydrin, 1,2-epoxybutane, 1,2-epoxyhexane, cis-2,3-epoxybutane, cis-1,2-dichloroepoxyethane and trans-1,2-dichloroepoxyethane. The protein is Isoprene-epoxide--glutathione S-transferase of Rhodococcus sp. (strain AD45).